We begin with the raw amino-acid sequence, 88 residues long: Small ribosomal subunit protein uS17 (88 aa).

It belongs to the universal ribosomal protein uS17 family. In terms of assembly, part of the 30S ribosomal subunit.

In terms of biological role, one of the primary rRNA binding proteins, it binds specifically to the 5'-end of 16S ribosomal RNA. The polypeptide is Small ribosomal subunit protein uS17 (Ectopseudomonas mendocina (strain ymp) (Pseudomonas mendocina)).